The chain runs to 867 residues: Putative tyrosine-protein kinase F09A5.2 (867 aa).

2 consecutive transmembrane segments (helical) span residues Val45–Ser65 and Leu355–Val375. Asn395 and Asn423 each carry an N-linked (GlcNAc...) asparagine glycan. Positions Val467 to Val757 constitute a Protein kinase domain. Leu473 to Val481 lines the ATP pocket. N-linked (GlcNAc...) asparagine glycans are attached at residues Asn496 and Asn500. ATP is bound at residue Lys516. The N-linked (GlcNAc...) asparagine glycan is linked to Asn585. The active-site Proton acceptor is the Asp626. Disordered regions lie at residues Leu782–Ala821 and Ser848–Ser867. Residues Asp801–Ser810 are compositionally biased toward acidic residues. Residues Ser858 to Ser867 are compositionally biased toward polar residues. An N-linked (GlcNAc...) asparagine glycan is attached at Asn859.

Belongs to the protein kinase superfamily. Tyr protein kinase family.

The protein localises to the membrane. It carries out the reaction L-tyrosyl-[protein] + ATP = O-phospho-L-tyrosyl-[protein] + ADP + H(+). The sequence is that of Putative tyrosine-protein kinase F09A5.2 from Caenorhabditis elegans.